The following is a 167-amino-acid chain: Myelin basic protein (167 aa).

At alanine 1 the chain carries N-acetylalanine. Serine 7 and serine 12 each carry phosphoserine. Tyrosine 14 carries the phosphotyrosine modification. Threonine 17 is modified (phosphothreonine). Phosphoserine is present on serine 19. Threonine 20 carries the post-translational modification Phosphothreonine. A citrulline mark is found at arginine 25 and arginine 31. Threonine 35 carries the phosphothreonine modification. Serine 40 carries the phosphoserine modification. 2 positions are modified to omega-N-methylarginine: arginine 43 and arginine 49. An induces experimental autoimmune encephalomyelitis (EAE) 1 region spans residues phenylalanine 45 to histidine 87. The segment at glycine 46–serine 114 is disordered. Serine 56 carries the post-translational modification Phosphoserine. Phosphothreonine is present on threonine 67. Tyrosine 69 is modified (phosphotyrosine). Serine 76 carries the post-translational modification Phosphoserine. Phosphothreonine occurs at positions 94 and 97. Position 102 is a deamidated glutamine (glutamine 102). Arginine 106 is modified (omega-N-methylarginine; alternate). At arginine 106 the chain carries Symmetric dimethylarginine; alternate. Serine 114 carries the post-translational modification Phosphoserine. The tract at residues serine 114–proline 122 is induces experimental autoimmune encephalomyelitis (EAE) 2. Lysine 121 bears the N6-acetyllysine mark. Position 129 is a citrulline (arginine 129). The segment at glycine 136–arginine 167 is disordered. Position 144 is a deamidated glutamine (glutamine 144). Arginine 156 is subject to Citrulline. Serine 158 carries the phosphoserine modification. The residue at position 162 (serine 162) is a Phosphoserine; by UHMK1. Position 167 is a citrulline (arginine 167).

It belongs to the myelin basic protein family. As to quaternary structure, homodimer. At least 5 charge isomers; C1 (the most cationic, least modified, and most abundant form), C2, C3, C4 and C5 (the least cationic form); are produced as a result of optional post-translational modifications such as phosphorylation of serine or threonine residues, deamidation of glutamine or asparagine residues, citrullination and methylation of arginine residues. C1 and C2 are unphosphorylated, C3 and C4 are monophosphorylated and C5 is phosphorylated at two positions. Post-translationally, phosphorylated by TAOK2, VRK2, MAPK11, MAPK12, MAPK14 and MINK1. In terms of processing, proteolytically cleaved in B cell lysosomes by cathepsin CTSG which degrades the major immunogenic MBP epitope and prevents the activation of MBP-specific autoreactive T cells. In terms of tissue distribution, found in both the central and the peripheral nervous system.

The protein resides in the myelin membrane. Is, with PLP, the most abundant protein component of the myelin membrane in the CNS. Has a role in both the formation and stabilization of this compact multilayer arrangement of bilayers. Each splice variant and charge isomer may have a specialized function in the assembly of an optimized, biochemically functional myelin membrane. The protein is Myelin basic protein (MBP) of Cavia porcellus (Guinea pig).